A 311-amino-acid polypeptide reads, in one-letter code: Olfactory receptor 1L4 (311 aa).

The Extracellular segment spans residues Met1–Lys26. Asn5 carries N-linked (GlcNAc...) asparagine glycosylation. A helical membrane pass occupies residues Pro27–Ile50. Residues Tyr51–Thr58 lie on the Cytoplasmic side of the membrane. The helical transmembrane segment at Pro59 to Pro80 threads the bilayer. Residues Lys81 to Gln101 are Extracellular-facing. A disulfide bond links Cys98 and Cys190. A helical membrane pass occupies residues Met102–Ile121. Residues Asp122 to Trp140 are Cytoplasmic-facing. Residues His141–Phe159 traverse the membrane as a helical segment. Topologically, residues Arg160–Gln197 are extracellular. A helical transmembrane segment spans residues Met198–Leu220. At Gln221–Lys237 the chain is on the cytoplasmic side. The helical transmembrane segment at Ala238–Tyr260 threads the bilayer. The Extracellular portion of the chain corresponds to Phe261–Arg273. A helical membrane pass occupies residues Val274–Leu293. The Cytoplasmic portion of the chain corresponds to Arg294–Ser311.

Belongs to the G-protein coupled receptor 1 family.

The protein resides in the cell membrane. In terms of biological role, odorant receptor. This chain is Olfactory receptor 1L4 (OR1L4), found in Homo sapiens (Human).